The chain runs to 641 residues: SUMO-activating enzyme subunit 2-A (641 aa).

ATP contacts are provided by residues 24–29, D48, 56–59, K72, 95–96, and 117–122; these read GAGGIG, NLNR, SI, and DNNAAR. C158 and C161 together coordinate Zn(2+). C173 (glycyl thioester intermediate) is an active-site residue. The Zn(2+) site is built by C439 and C442. Positions 546–641 are disordered; the sequence is GDVPEKGPQK…EEDDDIIALD (96 aa). Over residues 548-561 the composition is skewed to basic and acidic residues; it reads VPEKGPQKPPEESV. The span at 562–579 shows a compositional bias: polar residues; sequence KNITNGSDDGAQPSTSKA. Acidic residues-rich tracts occupy residues 582 to 594 and 630 to 641; these read QDDV…DEES and PVEEDDDIIALD.

Belongs to the ubiquitin-activating E1 family. As to quaternary structure, heterodimer of sae1 and uba2/sae2. The heterodimer corresponds to the two domains that are encoded on a single polypeptide chain in ubiquitin-activating enzyme E1. Interacts with ube2i.

It is found in the nucleus. It participates in protein modification; protein sumoylation. In terms of biological role, the heterodimer acts as an E1 ligase for sumo1, sumo2, and sumo3. It mediates ATP-dependent activation of sumo proteins followed by formation of a thioester bond between a sumo protein and a conserved active site cysteine residue on uba2/sae2. The polypeptide is SUMO-activating enzyme subunit 2-A (uba2-a) (Xenopus laevis (African clawed frog)).